We begin with the raw amino-acid sequence, 223 residues long: 2-C-methyl-D-erythritol 4-phosphate cytidylyltransferase (223 aa).

This sequence belongs to the IspD/TarI cytidylyltransferase family. IspD subfamily.

The catalysed reaction is 2-C-methyl-D-erythritol 4-phosphate + CTP + H(+) = 4-CDP-2-C-methyl-D-erythritol + diphosphate. It functions in the pathway isoprenoid biosynthesis; isopentenyl diphosphate biosynthesis via DXP pathway; isopentenyl diphosphate from 1-deoxy-D-xylulose 5-phosphate: step 2/6. Its function is as follows. Catalyzes the formation of 4-diphosphocytidyl-2-C-methyl-D-erythritol from CTP and 2-C-methyl-D-erythritol 4-phosphate (MEP). In Prochlorococcus marinus (strain MIT 9215), this protein is 2-C-methyl-D-erythritol 4-phosphate cytidylyltransferase.